The primary structure comprises 132 residues: MSMQDTVGDMLTRIRNAQMANKVSVAMPSSKLRKSIADLLVNEGYVASAVVTEENNNKATLTIVLKYFEGKAVIETIQRFSRPGLRQHRGKDAIPTVKQGMGVAIVSTSQGIMSDRAARAAGIGGEIVAFVA.

The protein belongs to the universal ribosomal protein uS8 family. Part of the 30S ribosomal subunit. Contacts proteins S5 and S12.

Its function is as follows. One of the primary rRNA binding proteins, it binds directly to 16S rRNA central domain where it helps coordinate assembly of the platform of the 30S subunit. The polypeptide is Small ribosomal subunit protein uS8 (Psychrobacter arcticus (strain DSM 17307 / VKM B-2377 / 273-4)).